The following is a 447-amino-acid chain: N-succinylarginine dihydrolase (447 aa).

Substrate is bound by residues 19-28 (AGLSFGNEAS), N110, and 137-138 (HR). E174 is a catalytic residue. Residue R212 participates in substrate binding. Residue H248 is part of the active site. Substrate contacts are provided by D250 and N359. The Nucleophile role is filled by C365.

This sequence belongs to the succinylarginine dihydrolase family. Homodimer.

It carries out the reaction N(2)-succinyl-L-arginine + 2 H2O + 2 H(+) = N(2)-succinyl-L-ornithine + 2 NH4(+) + CO2. Its pathway is amino-acid degradation; L-arginine degradation via AST pathway; L-glutamate and succinate from L-arginine: step 2/5. Its function is as follows. Catalyzes the hydrolysis of N(2)-succinylarginine into N(2)-succinylornithine, ammonia and CO(2). The sequence is that of N-succinylarginine dihydrolase from Salmonella typhi.